The sequence spans 458 residues: Phosphomethylpyrimidine synthase (458 aa).

Substrate is bound by residues asparagine 80, methionine 109, tyrosine 139, histidine 175, 195–197, 236–239, and glutamate 275; these read SRG and DSLR. Histidine 279 is a binding site for Zn(2+). A substrate-binding site is contributed by tyrosine 302. Position 343 (histidine 343) interacts with Zn(2+). 3 residues coordinate [4Fe-4S] cluster: cysteine 423, cysteine 426, and cysteine 431.

It belongs to the ThiC family. [4Fe-4S] cluster is required as a cofactor.

The enzyme catalyses 5-amino-1-(5-phospho-beta-D-ribosyl)imidazole + S-adenosyl-L-methionine = 4-amino-2-methyl-5-(phosphooxymethyl)pyrimidine + CO + 5'-deoxyadenosine + formate + L-methionine + 3 H(+). Its pathway is cofactor biosynthesis; thiamine diphosphate biosynthesis. In terms of biological role, catalyzes the synthesis of the hydroxymethylpyrimidine phosphate (HMP-P) moiety of thiamine from aminoimidazole ribotide (AIR) in a radical S-adenosyl-L-methionine (SAM)-dependent reaction. The protein is Phosphomethylpyrimidine synthase of Cyanothece sp. (strain PCC 7425 / ATCC 29141).